We begin with the raw amino-acid sequence, 708 residues long: C-Jun-amino-terminal kinase-interacting protein 1 (708 aa).

The disordered stretch occupies residues 1–26 (MAERESGLSGGAASPPAASPFLGLHI). Residues 11-24 (GAASPPAASPFLGL) are compositionally biased toward low complexity. Phosphoserine is present on residues serine 14, serine 28, and serine 39. Positions 69–368 (PPRAGLLSAG…PPRASLSSDT (300 aa)) are disordered. Low complexity predominate over residues 71-87 (RAGLLSAGSSGSAGSRL). Position 103 is a phosphothreonine; by MAPK8, MAPK9 and MAPK10 (threonine 103). The span at 105–116 (GAEDDEEDDDEL) shows a compositional bias: acidic residues. Residues 126-282 (SKAESGQEPA…EATEEIYLTP (157 aa)) are JNK-binding domain (JBD). Serine 149 is modified (phosphoserine). A minimal inhibitory domain (MID) region spans residues 154–173 (RPKRPTTLNLFPQVPRSQDT). Residues 159–179 (TTLNLFPQVPRSQDTLNNNSL) are compositionally biased toward polar residues. 5 positions are modified to phosphoserine: serine 178, serine 184, serine 190, serine 192, and serine 193. Residues 191-201 (RSSSPLKTGEQ) show a composition bias toward polar residues. Threonine 202 is subject to Phosphothreonine; by MAPK8, MAPK9 and MAPK10. Phosphoserine is present on serine 211. Over residues 220-232 (PVPTQDRGTSTDS) the composition is skewed to polar residues. Residues 264-274 (IHYQADVRLEA) show a composition bias toward basic and acidic residues. The interval 280–468 (LTPVQRPPDP…NVFMSGRSRS (189 aa)) is interaction with MAP3K7. Over residues 292 to 308 (PTSTFLPPTESRMSVSS) the composition is skewed to polar residues. A phosphoserine mark is found at serine 308, serine 325, serine 327, serine 337, serine 352, serine 363, serine 366, serine 404, and serine 406. 2 consecutive short sequence motifs (D-box) follow at residues 350 to 357 (RGSLGEPP) and 361 to 369 (RASLSSDTS). Threonine 408 bears the Phosphothreonine mark. The interval 426 to 448 (EEYEEAPQPRPPTCLSEDSTPDE) is disordered. 2 positions are modified to phosphoserine: serine 441 and serine 444. Phosphothreonine is present on threonine 445. Phosphoserine is present on residues serine 466, serine 468, serine 469, and serine 470. The interaction with VRK2 stretch occupies residues 468 to 657 (SSSAESFGLF…PKNNKYFGFI (190 aa)). One can recognise an SH3 domain in the interval 485–546 (EHEQTHRAIF…PAYYAIEVTK (62 aa)). The 140-residue stretch at 558 to 697 (SDWIDQFRVK…FQQFYKQFVE (140 aa)) folds into the PID domain.

This sequence belongs to the JIP scaffold family. As to quaternary structure, forms homo- or heterooligomeric complexes. Binds specific components of the JNK signaling pathway namely MAPK8/JNK1, MAPK9/JNK2, MAPK10/JNK3, MAP2K7/MKK7, MAP3K11/MLK3 and DLK1. Also binds the proline-rich domain-containing splice variant of apolipoprotein E receptor 2 (ApoER2). Interacts, via the PID domain, with ARHGEF28. Binds the cytoplasmic tails of LRP1 and LRP2 (Megalin). Binds the TPR motif-containing C-terminal of kinesin light chain, KLC1. Pre-assembled MAPK8IP1 scaffolding complexes are then transported as a cargo of kinesin, to the required subcellular location. Interacts with the cytoplasmic domain of APP. Interacts with DCLK2, VRK2 and MAP3K7/TAK1. Found in a complex with SH3RF1, RAC1, MAP3K11/MLK3, MAP2K7/MKK7 and MAPK8/JNK1. Found in a complex with SH3RF1, RAC2, MAP3K7/TAK1, MAP2K7/MKK7, MAPK8/JNK1 and MAPK9/JNK2. Interacts with SH3RF2. Post-translationally, phosphorylated by MAPK8, MAPK9 and MAPK10. Phosphorylation on Thr-103 is also necessary for the dissociation and activation of MAP3K12. Phosphorylated by VRK2. Hyperphosphorylated during mitosis following activation of stress-activated and MAP kinases. In terms of processing, ubiquitinated. Two preliminary events are required to prime for ubiquitination; phosphorylation and an increased in intracellular calcium concentration. Then, the calcium influx initiates ubiquitination and degradation by the ubiquitin-proteasome pathway. As to expression, highly expressed in brain and pancreatic beta-cells. Weaker expression found in kidney.

It localises to the cytoplasm. The protein resides in the perinuclear region. Its subcellular location is the nucleus. It is found in the endoplasmic reticulum membrane. The protein localises to the mitochondrion membrane. In terms of biological role, the JNK-interacting protein (JIP) group of scaffold proteins selectively mediates JNK signaling by aggregating specific components of the MAPK cascade to form a functional JNK signaling module. Required for JNK activation in response to excitotoxic stress. Cytoplasmic MAPK8IP1 causes inhibition of JNK-regulated activity by retaining JNK in the cytoplasm and thus inhibiting the JNK phosphorylation of c-Jun. May also participate in ApoER2-specific reelin signaling. Directly, or indirectly, regulates GLUT2 gene expression and beta-cell function. Appears to have a role in cell signaling in mature and developing nerve terminals. May function as a regulator of vesicle transport, through interactions with the JNK-signaling components and motor proteins. Functions as an anti-apoptotic protein and whose level seems to influence the beta-cell death or survival response. Acts as a scaffold protein that coordinates with SH3RF1 in organizing different components of the JNK pathway, including RAC1 or RAC2, MAP3K11/MLK3 or MAP3K7/TAK1, MAP2K7/MKK7, MAPK8/JNK1 and/or MAPK9/JNK2 into a functional multiprotein complex to ensure the effective activation of the JNK signaling pathway. Regulates the activation of MAPK8/JNK1 and differentiation of CD8(+) T-cells. The protein is C-Jun-amino-terminal kinase-interacting protein 1 (Mapk8ip1) of Rattus norvegicus (Rat).